A 311-amino-acid polypeptide reads, in one-letter code: Telomere-binding protein I1 homolog (311 aa).

The protein belongs to the chordopoxvirinae I1 family.

It is found in the virion. Late DNA-binding protein which binds to the hairpin form of the viral telomeric sequence. Required for the production of mature virions (MV). In Fowlpox virus (strain NVSL) (FPV), this protein is Telomere-binding protein I1 homolog.